Reading from the N-terminus, the 388-residue chain is LL-diaminopimelate aminotransferase (388 aa).

2 residues coordinate substrate: Tyr16 and Gly41. Pyridoxal 5'-phosphate-binding positions include Tyr70, 104–105 (SK), Tyr129, Asn179, Tyr210, and 239–241 (SLS). Substrate is bound by residues Lys105, Tyr129, and Asn179. Residue Lys242 is modified to N6-(pyridoxal phosphate)lysine. Position 250 (Arg250) interacts with pyridoxal 5'-phosphate. Substrate is bound at residue Arg368.

It belongs to the class-I pyridoxal-phosphate-dependent aminotransferase family. LL-diaminopimelate aminotransferase subfamily. In terms of assembly, homodimer. Pyridoxal 5'-phosphate is required as a cofactor.

The catalysed reaction is (2S,6S)-2,6-diaminopimelate + 2-oxoglutarate = (S)-2,3,4,5-tetrahydrodipicolinate + L-glutamate + H2O + H(+). It functions in the pathway amino-acid biosynthesis; L-lysine biosynthesis via DAP pathway; LL-2,6-diaminopimelate from (S)-tetrahydrodipicolinate (aminotransferase route): step 1/1. In terms of biological role, involved in the synthesis of meso-diaminopimelate (m-DAP or DL-DAP), required for both lysine and peptidoglycan biosynthesis. Catalyzes the direct conversion of tetrahydrodipicolinate to LL-diaminopimelate. The polypeptide is LL-diaminopimelate aminotransferase (Nitratidesulfovibrio vulgaris (strain ATCC 29579 / DSM 644 / CCUG 34227 / NCIMB 8303 / VKM B-1760 / Hildenborough) (Desulfovibrio vulgaris)).